The primary structure comprises 476 residues: Cytoplasmic 60S subunit biogenesis factor ZNF622 (476 aa).

A2 is modified (N-acetylalanine). 2 consecutive U1-type zinc fingers follow at residues 4 to 28 (LTCITCRVAFRDAELQRAHYKTDWH) and 69 to 93 (TYCTACGKKFATFNAYENHLGSRRH). Positions 137 to 243 (AIKAQPSTSP…AEDAAAEESP (107 aa)) are disordered. The segment covering 167–177 (VPERDPTEKPP) has biased composition (basic and acidic residues). Acidic residues predominate over residues 195–239 (EDGEEEGEEEEEDDEDEDWEDIDSDDGLECEDPGVEDQDAEDAAA). S275 bears the Phosphoserine mark.

This sequence belongs to the REI1 family. In terms of assembly, homo- and heterodimer. Associates with pre-60S ribosomal particles. Interacts with MELK and MYBL2. Interacts with DNAJC21. In terms of processing, phosphorylated by MELK. The phosphorylation may redirect the protein to the nucleus. Ubiquitinated by HECTD1, leading to its degradation.

It localises to the cytoplasm. It is found in the nucleus. Pre-60S-associated cytoplasmic factor involved in the cytoplasmic maturation of the 60S subunit. This Mus musculus (Mouse) protein is Cytoplasmic 60S subunit biogenesis factor ZNF622 (Znf622).